The primary structure comprises 191 residues: MAERDNRRGRRDDRDETPEFADRLVAINRVSKTVKGGKRFGFAALVVVGDQRGRVGFGKGKAKEVPEAIRKATEQAKRQMIRVPLREGRTLHHDIEGRHGAGKVMMRTAPQGTGIIAGGPMRAVFEMLGVQDVVAKSIGSQNPYNMIRATLDGLRKETSPRMVAQRRGKKVSDILKKDGEPAEAAAEPAEA.

Positions 20–83 (FADRLVAINR…EQAKRQMIRV (64 aa)) constitute an S5 DRBM domain. Positions 158 to 191 (TSPRMVAQRRGKKVSDILKKDGEPAEAAAEPAEA) are disordered. Residues 170 to 180 (KVSDILKKDGE) are compositionally biased toward basic and acidic residues. The span at 182-191 (AEAAAEPAEA) shows a compositional bias: low complexity.

This sequence belongs to the universal ribosomal protein uS5 family. Part of the 30S ribosomal subunit. Contacts proteins S4 and S8.

In terms of biological role, with S4 and S12 plays an important role in translational accuracy. Functionally, located at the back of the 30S subunit body where it stabilizes the conformation of the head with respect to the body. This chain is Small ribosomal subunit protein uS5, found in Dinoroseobacter shibae (strain DSM 16493 / NCIMB 14021 / DFL 12).